We begin with the raw amino-acid sequence, 583 residues long: Proline--tRNA ligase (583 aa).

It belongs to the class-II aminoacyl-tRNA synthetase family. ProS type 1 subfamily. Homodimer.

Its subcellular location is the cytoplasm. It carries out the reaction tRNA(Pro) + L-proline + ATP = L-prolyl-tRNA(Pro) + AMP + diphosphate. Its function is as follows. Catalyzes the attachment of proline to tRNA(Pro) in a two-step reaction: proline is first activated by ATP to form Pro-AMP and then transferred to the acceptor end of tRNA(Pro). As ProRS can inadvertently accommodate and process non-cognate amino acids such as alanine and cysteine, to avoid such errors it has two additional distinct editing activities against alanine. One activity is designated as 'pretransfer' editing and involves the tRNA(Pro)-independent hydrolysis of activated Ala-AMP. The other activity is designated 'posttransfer' editing and involves deacylation of mischarged Ala-tRNA(Pro). The misacylated Cys-tRNA(Pro) is not edited by ProRS. This Aromatoleum aromaticum (strain DSM 19018 / LMG 30748 / EbN1) (Azoarcus sp. (strain EbN1)) protein is Proline--tRNA ligase.